We begin with the raw amino-acid sequence, 1361 residues long: DNA-directed RNA polymerase subunit beta (1361 aa).

It belongs to the RNA polymerase beta chain family. In terms of assembly, the RNAP catalytic core consists of 2 alpha, 1 beta, 1 beta' and 1 omega subunit. When a sigma factor is associated with the core the holoenzyme is formed, which can initiate transcription.

The catalysed reaction is RNA(n) + a ribonucleoside 5'-triphosphate = RNA(n+1) + diphosphate. DNA-dependent RNA polymerase catalyzes the transcription of DNA into RNA using the four ribonucleoside triphosphates as substrates. The polypeptide is DNA-directed RNA polymerase subunit beta (Saccharophagus degradans (strain 2-40 / ATCC 43961 / DSM 17024)).